We begin with the raw amino-acid sequence, 487 residues long: Fibroblast growth factor receptor-like 1 (487 aa).

The signal sequence occupies residues 1–18 (MGLQLALLLAGIVALSDS). At 19 to 371 (ARGPPRIADK…PSSVSSLPWP (353 aa)) the chain is on the extracellular side. The 87-residue stretch at 23 to 109 (PRIADKVIHR…GSTNVNYTLI (87 aa)) folds into the Ig-like C2-type 1 domain. An intrachain disulfide couples cysteine 45 to cysteine 93. Asparagine 105 carries an N-linked (GlcNAc...) asparagine glycan. A compositionally biased stretch (polar residues) spans 115-125 (SSGKNSQTPEG). The tract at residues 115-147 (SSGKNSQTPEGSNGEYEDHSGKQWAQPRFTQPA) is disordered. Ig-like C2-type domains follow at residues 141 to 231 (PRFT…YKVE) and 240 to 348 (PILT…AFLT). A disulfide bridge links cysteine 166 with cysteine 215. Residues asparagine 225, asparagine 249, and asparagine 287 are each glycosylated (N-linked (GlcNAc...) asparagine). Cysteine 262 and cysteine 332 are disulfide-bonded. Residues 372–392 (VIIGIPAGAVFIFGTILLWLC) traverse the membrane as a helical segment. The Cytoplasmic segment spans residues 393–487 (QTKKKPCSPP…HQHQHIQYQC (95 aa)).

As to quaternary structure, interacts with heparin and FGF2. As to expression, expressed in cartilaginous structures.

Its subcellular location is the cell membrane. Its function is as follows. Has a negative effect on cell proliferation. The sequence is that of Fibroblast growth factor receptor-like 1 (FGFRL1) from Gallus gallus (Chicken).